Here is a 350-residue protein sequence, read N- to C-terminus: Adenine deaminase (350 aa).

Residues histidine 24, histidine 26, and histidine 207 each contribute to the Zn(2+) site. The Proton donor role is filled by glutamate 210. Aspartate 288 provides a ligand contact to Zn(2+). Aspartate 289 provides a ligand contact to substrate.

Belongs to the metallo-dependent hydrolases superfamily. Adenosine and AMP deaminases family. Adenine deaminase type 2 subfamily. The cofactor is Zn(2+).

The enzyme catalyses adenine + H2O + H(+) = hypoxanthine + NH4(+). Catalyzes the hydrolytic deamination of adenine to hypoxanthine. Plays an important role in the purine salvage pathway and in nitrogen catabolism. In Paraburkholderia xenovorans (strain LB400), this protein is Adenine deaminase.